A 402-amino-acid polypeptide reads, in one-letter code: NAD-dependent protein deacetylase sirtuin-7 (402 aa).

Residues M1–E23 are disordered. Basic and acidic residues predominate over residues R9 to E23. In terms of domain architecture, Deacetylase sirtuin-type spans P83–E330. Residues G108 to W127 and Q168 to D171 contribute to the NAD(+) site. H188 functions as the Proton acceptor in the catalytic mechanism. Positions 196, 199, 226, and 229 each coordinate Zn(2+). Residues G269 to S271, N298 to Q300, and C316 each bind NAD(+). Residues S355–A402 form a disordered region. The residue at position 390 (R390) is an Asymmetric dimethylarginine; alternate. Omega-N-methylarginine; alternate is present on R390. Over residues C392–A402 the composition is skewed to basic residues.

The protein belongs to the sirtuin family. Class IV subfamily. As to quaternary structure, interacts with UBTF and the RNA polymerase I complex. Interacts with components of the B-WICH complex, such as MYBBP1A, SMARCA5/SNF2H and BAZ1B/WSTF. Interacts with ELK4, leading to stabilization at target promoters for H3K18Ac deacetylation. Interacts with histone H2A and/or histone H2B. Interacts with DNMT1. Interacts with SIRT1. The cofactor is Zn(2+). Phosphorylated during mitosis. In terms of processing, methylation at Arg-390 by PRMT6 inhibits the H3K18Ac histone deacetylase activity, promoting mitochondria biogenesis and maintaining mitochondria respiration. Post-translationally, ubiquitinated via 'Lys-63'-linked ubiquitin chains. Deubiquitinated by USP7, inhibiting the H3K18Ac histone deacetylase activity and regulating gluconeogenesis. Ubiquitinated by E3 ubiquitin-protein ligase complex containing FBXO7; leading to proteasomal degradation. Detected in liver, spleen and testis. Detected in embryos.

It localises to the nucleus. The protein localises to the nucleolus. Its subcellular location is the nucleoplasm. It is found in the chromosome. The protein resides in the cytoplasm. The enzyme catalyses N(6)-acetyl-L-lysyl-[protein] + NAD(+) + H2O = 2''-O-acetyl-ADP-D-ribose + nicotinamide + L-lysyl-[protein]. The catalysed reaction is N(6)-glutaryl-L-lysyl-[protein] + NAD(+) + H2O = 2''-O-glutaryl-ADP-D-ribose + nicotinamide + L-lysyl-[protein]. It catalyses the reaction N(6)-succinyl-L-lysyl-[protein] + NAD(+) + H2O = 2''-O-succinyl-ADP-D-ribose + nicotinamide + L-lysyl-[protein]. It carries out the reaction N(6)-propanoyl-L-lysyl-[protein] + NAD(+) + H2O = 3''-O-propanoyl-ADP-D-ribose + nicotinamide + L-lysyl-[protein]. The enzyme catalyses N(6)-decanoyl-L-lysyl-[protein] + NAD(+) + H2O = 2''-O-decanoyl-ADP-D-ribose + nicotinamide + L-lysyl-[protein]. With respect to regulation, NAD-dependent protein-lysine deacetylase and deacylase activities are activated by nucleic acids. Histone deacetylase activity is activated by DNA. Protein-lysine deacylase activity is activated by RNA. H3K18Ac histone deacetylase activity is inhibited by methylation at Arg-390. H3K18Ac histone deacetylase activity is inhibited by deubiquitination by USP7. Functionally, NAD-dependent protein-lysine deacylase that can act both as a deacetylase or deacylase (desuccinylase, depropionylase and deglutarylase), depending on the context. Also acts as a dedecanoylase. Specifically mediates deacetylation of histone H3 at 'Lys-18' (H3K18Ac). In contrast to other histone deacetylases, displays strong preference for a specific histone mark, H3K18Ac, directly linked to control of gene expression. H3K18Ac is mainly present around the transcription start site of genes and has been linked to activation of nuclear hormone receptors; SIRT7 thereby acts as a transcription repressor. Moreover, H3K18 hypoacetylation has been reported as a marker of malignancy in various cancers and seems to maintain the transformed phenotype of cancer cells. Also able to mediate deacetylation of histone H3 at 'Lys-36' (H3K36Ac) in the context of nucleosomes. Also mediates deacetylation of non-histone proteins, such as ATM, CDK9, DDX21, DDB1, FBL, FKBP5/FKBP51, GABPB1, RAN, RRP9/U3-55K and POLR1E/PAF53. Enriched in nucleolus where it stimulates transcription activity of the RNA polymerase I complex. Acts by mediating the deacetylation of the RNA polymerase I subunit POLR1E/PAF53, thereby promoting the association of RNA polymerase I with the rDNA promoter region and coding region. In response to metabolic stress, SIRT7 is released from nucleoli leading to hyperacetylation of POLR1E/PAF53 and decreased RNA polymerase I transcription. Required to restore the transcription of ribosomal RNA (rRNA) at the exit from mitosis. Promotes pre-ribosomal RNA (pre-rRNA) cleavage at the 5'-terminal processing site by mediating deacetylation of RRP9/U3-55K, a core subunit of the U3 snoRNP complex. Mediates 'Lys-37' deacetylation of Ran, thereby regulating the nuclear export of NF-kappa-B subunit RELA/p65. Acts as a regulator of DNA damage repair by mediating deacetylation of ATM during the late stages of DNA damage response, promoting ATM dephosphorylation and deactivation. May also deacetylate p53/TP53 and promotes cell survival, however such data need additional confirmation. Suppresses the activity of the DCX (DDB1-CUL4-X-box) E3 ubiquitin-protein ligase complexes by mediating deacetylation of DDB1, which prevents the interaction between DDB1 and CUL4 (CUL4A or CUL4B). Activates RNA polymerase II transcription by mediating deacetylation of CDK9, thereby promoting 'Ser-2' phosphorylation of the C-terminal domain (CTD) of RNA polymerase II. Deacetylates FBL, promoting histone-glutamine methyltransferase activity of FBL. Acts as a regulator of mitochondrial function by catalyzing deacetylation of GABPB1. Regulates Akt/AKT1 activity by mediating deacetylation of FKBP5/FKBP51. Required to prevent R-loop-associated DNA damage and transcription-associated genomic instability by mediating deacetylation and subsequent activation of DDX21, thereby overcoming R-loop-mediated stalling of RNA polymerases. In addition to protein deacetylase activity, also acts as protein-lysine deacylase. Acts as a protein depropionylase by mediating depropionylation of Osterix (SP7), thereby regulating bone formation by osteoblasts. Acts as a histone deglutarylase by mediating deglutarylation of histone H4 on 'Lys-91' (H4K91glu); a mark that destabilizes nucleosomes by promoting dissociation of the H2A-H2B dimers from nucleosomes. Acts as a histone desuccinylase: in response to DNA damage, recruited to DNA double-strand breaks (DSBs) and catalyzes desuccinylation of histone H3 on 'Lys-122' (H3K122succ), thereby promoting chromatin condensation and DSB repair. Also promotes DSB repair by promoting H3K18Ac deacetylation, regulating non-homologous end joining (NHEJ). Along with its role in DNA repair, required for chromosome synapsis during prophase I of female meiosis by catalyzing H3K18Ac deacetylation. Involved in transcriptional repression of LINE-1 retrotransposon via H3K18Ac deacetylation, and promotes their association with the nuclear lamina. Required to stabilize ribosomal DNA (rDNA) heterochromatin and prevent cellular senescence induced by rDNA instability. Acts as a negative regulator of SIRT1 by preventing autodeacetylation of SIRT1, restricting SIRT1 deacetylase activity. This Mus musculus (Mouse) protein is NAD-dependent protein deacetylase sirtuin-7.